The chain runs to 785 residues: Endonuclease MutS2 (785 aa).

335–342 (GPNTGGKT) is a binding site for ATP. The Smr domain maps to 710–785 (LDLRGERYEN…GSGVTIVELK (76 aa)).

This sequence belongs to the DNA mismatch repair MutS family. MutS2 subfamily. In terms of assembly, homodimer. Binds to stalled ribosomes, contacting rRNA.

Its function is as follows. Endonuclease that is involved in the suppression of homologous recombination and thus may have a key role in the control of bacterial genetic diversity. In terms of biological role, acts as a ribosome collision sensor, splitting the ribosome into its 2 subunits. Detects stalled/collided 70S ribosomes which it binds and splits by an ATP-hydrolysis driven conformational change. Acts upstream of the ribosome quality control system (RQC), a ribosome-associated complex that mediates the extraction of incompletely synthesized nascent chains from stalled ribosomes and their subsequent degradation. Probably generates substrates for RQC. The polypeptide is Endonuclease MutS2 (Bacillus velezensis (strain DSM 23117 / BGSC 10A6 / LMG 26770 / FZB42) (Bacillus amyloliquefaciens subsp. plantarum)).